Consider the following 136-residue polypeptide: ATP synthase epsilon chain (136 aa).

Belongs to the ATPase epsilon chain family. In terms of assembly, F-type ATPases have 2 components, CF(1) - the catalytic core - and CF(0) - the membrane proton channel. CF(1) has five subunits: alpha(3), beta(3), gamma(1), delta(1), epsilon(1). CF(0) has three main subunits: a, b and c.

Its subcellular location is the cell membrane. Functionally, produces ATP from ADP in the presence of a proton gradient across the membrane. This chain is ATP synthase epsilon chain, found in Ureaplasma urealyticum serovar 10 (strain ATCC 33699 / Western).